The primary structure comprises 316 residues: Aspartate carbamoyltransferase catalytic subunit (316 aa).

Carbamoyl phosphate-binding residues include Arg-66 and Thr-67. Lys-94 contributes to the L-aspartate binding site. Arg-116, His-146, and Gln-149 together coordinate carbamoyl phosphate. L-aspartate contacts are provided by Arg-179 and Arg-234. Positions 275 and 276 each coordinate carbamoyl phosphate.

Belongs to the aspartate/ornithine carbamoyltransferase superfamily. ATCase family. As to quaternary structure, heterododecamer (2C3:3R2) of six catalytic PyrB chains organized as two trimers (C3), and six regulatory PyrI chains organized as three dimers (R2).

The catalysed reaction is carbamoyl phosphate + L-aspartate = N-carbamoyl-L-aspartate + phosphate + H(+). It functions in the pathway pyrimidine metabolism; UMP biosynthesis via de novo pathway; (S)-dihydroorotate from bicarbonate: step 2/3. Catalyzes the condensation of carbamoyl phosphate and aspartate to form carbamoyl aspartate and inorganic phosphate, the committed step in the de novo pyrimidine nucleotide biosynthesis pathway. This is Aspartate carbamoyltransferase catalytic subunit from Nitrosomonas eutropha (strain DSM 101675 / C91 / Nm57).